The primary structure comprises 237 residues: Lectin alpha chain (237 aa).

Mn(2+)-binding residues include glutamate 8 and aspartate 10. Ca(2+)-binding residues include aspartate 10, tyrosine 12, asparagine 14, and aspartate 19. Tyrosine 12 contributes to the a carbohydrate binding site. Positions 19, 24, and 34 each coordinate Mn(2+). 99-100 contacts a carbohydrate; that stretch reads LY. Aspartate 208 contacts Ca(2+). Residue arginine 228 participates in a carbohydrate binding.

This sequence belongs to the leguminous lectin family. As to quaternary structure, homotetramer. The beta and gamma chains are produced by partial proteolytic processing of the lectin alpha chain by an asparaginyl endopeptidase. Mixture of 60% alpha lectin and 40% of its beta and gamma proteolytic fragments.

D-mannose/D-glucose-binding lectin. Has anti-inflammatory activity in rats. Induces histamine release in mast cells from rat. Induces lymphocyte proliferation and IFNG production. Shows toxicity against the aquatic snail B.glabrata at concentrations higher than 50 ug/ml. This is Lectin alpha chain from Dioclea grandiflora (Mucana).